A 342-amino-acid chain; its full sequence is Succinylglutamate desuccinylase (342 aa).

Zn(2+)-binding residues include His-63, Glu-66, and His-155. Residue Glu-219 is part of the active site.

Belongs to the AspA/AstE family. Succinylglutamate desuccinylase subfamily. Zn(2+) is required as a cofactor.

It catalyses the reaction N-succinyl-L-glutamate + H2O = L-glutamate + succinate. It functions in the pathway amino-acid degradation; L-arginine degradation via AST pathway; L-glutamate and succinate from L-arginine: step 5/5. Its function is as follows. Transforms N(2)-succinylglutamate into succinate and glutamate. This is Succinylglutamate desuccinylase from Vibrio campbellii (strain ATCC BAA-1116).